The primary structure comprises 120 residues: MGFPIPDPYVWDESFKVFYQLLDDKHKQIFQGVFDCAKDPSSAAKLQKLIEVTAKHFSDEENMMQQSKYSGYPPHKKAHEEFLGKLRGLRAPLDTAGLDYCKDWLVQHIKTIDFKYKGKL.

His-26, His-56, Glu-60, His-75, His-79, His-108, and Asp-113 together coordinate Fe cation.

The protein belongs to the hemerythrin family.

Myohemerythrin is an oxygen-binding protein found in the retractor muscles of certain worms. The oxygen-binding site contains two iron atoms. This Sipunculus nudus (Sipunculan worm) protein is Myohemerythrin.